Reading from the N-terminus, the 281-residue chain is uncharacterized protein (281 aa).

This is an uncharacterized protein from Mycoplasma pneumoniae (strain ATCC 29342 / M129 / Subtype 1) (Mycoplasmoides pneumoniae).